The following is a 161-amino-acid chain: Lipoprotein signal peptidase (161 aa).

The next 3 membrane-spanning stretches (helical) occupy residues 6–26 (ILFL…KFYV), 67–87 (GLFF…YLIK), and 90–110 (VSDL…MGNL). Catalysis depends on residues D121 and D139. A helical transmembrane segment spans residues 134–154 (AFNIADTAISIGVLFLVVDMI).

It belongs to the peptidase A8 family.

Its subcellular location is the cell inner membrane. The enzyme catalyses Release of signal peptides from bacterial membrane prolipoproteins. Hydrolyzes -Xaa-Yaa-Zaa-|-(S,diacylglyceryl)Cys-, in which Xaa is hydrophobic (preferably Leu), and Yaa (Ala or Ser) and Zaa (Gly or Ala) have small, neutral side chains.. It functions in the pathway protein modification; lipoprotein biosynthesis (signal peptide cleavage). Functionally, this protein specifically catalyzes the removal of signal peptides from prolipoproteins. This chain is Lipoprotein signal peptidase, found in Syntrophus aciditrophicus (strain SB).